The chain runs to 379 residues: Alkanesulfonate monooxygenase (379 aa).

It belongs to the SsuD family.

It carries out the reaction an alkanesulfonate + FMNH2 + O2 = an aldehyde + FMN + sulfite + H2O + 2 H(+). Its function is as follows. Catalyzes the desulfonation of aliphatic sulfonates. In Pseudomonas savastanoi pv. phaseolicola (strain 1448A / Race 6) (Pseudomonas syringae pv. phaseolicola (strain 1448A / Race 6)), this protein is Alkanesulfonate monooxygenase.